The sequence spans 256 residues: Putative F-box protein At3g51171 (256 aa).

The F-box domain occupies 1–44 (MVPLPWELEEDILSRLAAQSLVRFRSVCKRWNYLFDEKSFIKNH).

This chain is Putative F-box protein At3g51171, found in Arabidopsis thaliana (Mouse-ear cress).